We begin with the raw amino-acid sequence, 213 residues long: RNA pyrophosphohydrolase (213 aa).

The Nudix hydrolase domain occupies 6 to 149 (GFRPNVGIVL…KRGVYEIALT (144 aa)). The Nudix box motif lies at 38 to 59 (GGIDRGETPEQAMIRELHEEVG). The tract at residues 185-213 (NFELPPGGSFEPNPQTSYGLDASGKPHET) is disordered.

The protein belongs to the Nudix hydrolase family. RppH subfamily. It depends on a divalent metal cation as a cofactor.

Its function is as follows. Accelerates the degradation of transcripts by removing pyrophosphate from the 5'-end of triphosphorylated RNA, leading to a more labile monophosphorylated state that can stimulate subsequent ribonuclease cleavage. The sequence is that of RNA pyrophosphohydrolase from Albidiferax ferrireducens (strain ATCC BAA-621 / DSM 15236 / T118) (Rhodoferax ferrireducens).